A 296-amino-acid chain; its full sequence is Glycine--tRNA ligase alpha subunit (296 aa).

This sequence belongs to the class-II aminoacyl-tRNA synthetase family. Tetramer of two alpha and two beta subunits.

The protein resides in the cytoplasm. It catalyses the reaction tRNA(Gly) + glycine + ATP = glycyl-tRNA(Gly) + AMP + diphosphate. This chain is Glycine--tRNA ligase alpha subunit, found in Prochlorococcus marinus (strain SARG / CCMP1375 / SS120).